Reading from the N-terminus, the 352-residue chain is C-C chemokine receptor type 5 (352 aa).

Over 1 to 30 (MDYQVSSPIYDINYYTSEPCQKINVKQIAA) the chain is Extracellular. Sulfotyrosine is present on Tyr-3. O-linked (GalNAc...) serine glycans are attached at residues Ser-6 and Ser-7. Sulfotyrosine is present on residues Tyr-10, Tyr-14, and Tyr-15. Disulfide bonds link Cys-20/Cys-269 and Cys-101/Cys-178. The helical transmembrane segment at 31–58 (RLLPPLYSLVFIFGFVGNMLVILILINC) threads the bilayer. The Cytoplasmic portion of the chain corresponds to 59–68 (KRLKSMTDIY). A helical membrane pass occupies residues 69–89 (LLNLAISDLFFLLTVPFWAHY). Residues 90-102 (AAAQWDFGNTMCQ) lie on the Extracellular side of the membrane. Residues 103–124 (LLTGLYFIGFFSGIFFIILLTI) traverse the membrane as a helical segment. Residues 125 to 141 (DRYLAVVHAVFALKART) are Cytoplasmic-facing. The helical transmembrane segment at 142–166 (VTFGVVTSVITWVVAVFASLPGIIF) threads the bilayer. The Extracellular portion of the chain corresponds to 167-198 (TRSQKEGLHYTCSSHFPYSQYQFWKNFQTLKI). A helical membrane pass occupies residues 199 to 218 (VILGLVLPLLVMVICYSGIL). The Cytoplasmic portion of the chain corresponds to 219 to 235 (KTLLRCRNEKKRHRAVR). A helical membrane pass occupies residues 236-260 (LIFTIMIVYFLFWAPYNIVLLLNTF). Residues 261-277 (QEFFGLNNCSSSNRLDQ) are Extracellular-facing. Residues 278–301 (AMQVTETLGMTHCCINPIIYAFVG) form a helical membrane-spanning segment. Topologically, residues 302–352 (EKFRNYLLVFFQKHIAKRFCKCCSIFQQEAPERASSVYTRSTGEQEISVGL) are cytoplasmic. 3 S-palmitoyl cysteine lipidation sites follow: Cys-321, Cys-323, and Cys-324. Residues Ser-336, Ser-337, Ser-342, and Ser-349 each carry the phosphoserine; by BARK1 modification.

Belongs to the G-protein coupled receptor 1 family. In terms of assembly, interacts with PRAF2. Efficient ligand binding to CCL3/MIP-1alpha and CCL4/MIP-1beta requires sulfation, O-glycosylation and sialic acid modifications. Glycosylation on Ser-6 is required for efficient binding of CCL4. Interacts with GRK2. Interacts with ARRB1 and ARRB2. Interacts with CNIH4. Interacts with S100A4; this interaction stimulates T-lymphocyte chemotaxis. As to quaternary structure, (Microbial infection) Interacts with HIV-1 surface protein gp120. (Microbial infection) May interact with human cytomegalovirus/HHV-5 protein UL78. Post-translationally, sulfated on at least 2 of the N-terminal tyrosines. Sulfation contributes to the efficiency of HIV-1 entry and is required for efficient binding of the chemokines, CCL3 and CCL4. O-glycosylated, but not N-glycosylated. Ser-6 appears to be the major site even if Ser-7 may be also O-glycosylated. Also sialylated glycans present which contribute to chemokine binding. Thr-16 and Ser-17 may also be glycosylated and, if so, with small moieties such as a T-antigen. In terms of processing, palmitoylation in the C-terminal is important for cell surface expression, and to a lesser extent, for HIV entry. Post-translationally, phosphorylation on serine residues in the C-terminal is stimulated by binding CC chemokines especially by APO-RANTES. In terms of tissue distribution, highly expressed in spleen, thymus, in the myeloid cell line THP-1, in the promyeloblastic cell line KG-1a and on CD4+ and CD8+ T-cells. Medium levels in peripheral blood leukocytes and in small intestine. Low levels in ovary and lung.

Its subcellular location is the cell membrane. Its function is as follows. Receptor for a number of inflammatory CC-chemokines including CCL3/MIP-1-alpha, CCL4/MIP-1-beta and RANTES and subsequently transduces a signal by increasing the intracellular calcium ion level. May play a role in the control of granulocytic lineage proliferation or differentiation. Participates in T-lymphocyte migration to the infection site by acting as a chemotactic receptor. In terms of biological role, (Microbial infection) Acts as a coreceptor (CD4 being the primary receptor) of human immunodeficiency virus-1/HIV-1. This Homo sapiens (Human) protein is C-C chemokine receptor type 5.